Here is a 248-residue protein sequence, read N- to C-terminus: Aspartate/glutamate leucyltransferase (248 aa).

This sequence belongs to the R-transferase family. Bpt subfamily.

It localises to the cytoplasm. The catalysed reaction is N-terminal L-glutamyl-[protein] + L-leucyl-tRNA(Leu) = N-terminal L-leucyl-L-glutamyl-[protein] + tRNA(Leu) + H(+). The enzyme catalyses N-terminal L-aspartyl-[protein] + L-leucyl-tRNA(Leu) = N-terminal L-leucyl-L-aspartyl-[protein] + tRNA(Leu) + H(+). In terms of biological role, functions in the N-end rule pathway of protein degradation where it conjugates Leu from its aminoacyl-tRNA to the N-termini of proteins containing an N-terminal aspartate or glutamate. This is Aspartate/glutamate leucyltransferase from Methylorubrum extorquens (strain PA1) (Methylobacterium extorquens).